The chain runs to 354 residues: Phospho-N-acetylmuramoyl-pentapeptide-transferase (354 aa).

The next 10 membrane-spanning stretches (helical) occupy residues 27–47 (ATLLTALVIGLIIGPRFINML), 73–93 (TMGGLMIVTALTLSLLLWMDV), 97–117 (LVWACAVVTLGFGLIGFLDDY), 138–158 (FVVAAFAAWLAVGETNLYVPV), 162–182 (LYVPLGPFYYLFAIFVIVGAG), 193–213 (GLAIMPVIIAAGTFAIIAYLA), 230–250 (AGELAIFCAAMMGAGLAFLWF), 256–276 (AVFMGDTGSLALGGALGVIAV), 282–302 (IVLAIVGGLFVMEAVSVIVQV), and 331–351 (TVVIRFWIVSIVLALIGLATL).

The protein belongs to the glycosyltransferase 4 family. MraY subfamily. Mg(2+) serves as cofactor.

It is found in the cell inner membrane. It carries out the reaction UDP-N-acetyl-alpha-D-muramoyl-L-alanyl-gamma-D-glutamyl-meso-2,6-diaminopimeloyl-D-alanyl-D-alanine + di-trans,octa-cis-undecaprenyl phosphate = di-trans,octa-cis-undecaprenyl diphospho-N-acetyl-alpha-D-muramoyl-L-alanyl-D-glutamyl-meso-2,6-diaminopimeloyl-D-alanyl-D-alanine + UMP. The protein operates within cell wall biogenesis; peptidoglycan biosynthesis. In terms of biological role, catalyzes the initial step of the lipid cycle reactions in the biosynthesis of the cell wall peptidoglycan: transfers peptidoglycan precursor phospho-MurNAc-pentapeptide from UDP-MurNAc-pentapeptide onto the lipid carrier undecaprenyl phosphate, yielding undecaprenyl-pyrophosphoryl-MurNAc-pentapeptide, known as lipid I. The polypeptide is Phospho-N-acetylmuramoyl-pentapeptide-transferase (Novosphingobium aromaticivorans (strain ATCC 700278 / DSM 12444 / CCUG 56034 / CIP 105152 / NBRC 16084 / F199)).